Consider the following 313-residue polypeptide: Ribosomal RNA small subunit methyltransferase H (313 aa).

S-adenosyl-L-methionine contacts are provided by residues 35-37, Asp55, Phe79, Asp101, and Gln108; that span reads GGH.

Belongs to the methyltransferase superfamily. RsmH family.

The protein localises to the cytoplasm. It carries out the reaction cytidine(1402) in 16S rRNA + S-adenosyl-L-methionine = N(4)-methylcytidine(1402) in 16S rRNA + S-adenosyl-L-homocysteine + H(+). In terms of biological role, specifically methylates the N4 position of cytidine in position 1402 (C1402) of 16S rRNA. In Klebsiella pneumoniae subsp. pneumoniae (strain ATCC 700721 / MGH 78578), this protein is Ribosomal RNA small subunit methyltransferase H.